The chain runs to 365 residues: UDP-N-acetylglucosamine--N-acetylmuramyl-(pentapeptide) pyrophosphoryl-undecaprenol N-acetylglucosamine transferase (365 aa).

UDP-N-acetyl-alpha-D-glucosamine contacts are provided by residues 12–14 (TGG), Asn-123, Arg-166, Ser-194, and Gln-295.

It belongs to the glycosyltransferase 28 family. MurG subfamily.

The protein resides in the cell inner membrane. The catalysed reaction is di-trans,octa-cis-undecaprenyl diphospho-N-acetyl-alpha-D-muramoyl-L-alanyl-D-glutamyl-meso-2,6-diaminopimeloyl-D-alanyl-D-alanine + UDP-N-acetyl-alpha-D-glucosamine = di-trans,octa-cis-undecaprenyl diphospho-[N-acetyl-alpha-D-glucosaminyl-(1-&gt;4)]-N-acetyl-alpha-D-muramoyl-L-alanyl-D-glutamyl-meso-2,6-diaminopimeloyl-D-alanyl-D-alanine + UDP + H(+). It functions in the pathway cell wall biogenesis; peptidoglycan biosynthesis. Cell wall formation. Catalyzes the transfer of a GlcNAc subunit on undecaprenyl-pyrophosphoryl-MurNAc-pentapeptide (lipid intermediate I) to form undecaprenyl-pyrophosphoryl-MurNAc-(pentapeptide)GlcNAc (lipid intermediate II). This is UDP-N-acetylglucosamine--N-acetylmuramyl-(pentapeptide) pyrophosphoryl-undecaprenol N-acetylglucosamine transferase from Phenylobacterium zucineum (strain HLK1).